The primary structure comprises 424 residues: Ubiquitin carboxyl-terminal hydrolase 12/46 homolog (424 aa).

The USP domain maps to 24 to 421; the sequence is FGLVNFGNTC…TGYILFYQSR (398 aa). Cys-33 acts as the Nucleophile in catalysis. Residues 131 to 189 form a disordered region; the sequence is NAGPSNGNPKATNQGGSTSAMASSIASKSSSTSNSNSNSNSTTNSNGNSSNSTGSLNAN. A compositionally biased stretch (polar residues) spans 133–144; it reads GPSNGNPKATNQ. A compositionally biased stretch (low complexity) spans 145–189; that stretch reads GGSTSAMASSIASKSSSTSNSNSNSNSTTNSNGNSSNSTGSLNAN. His-369 acts as the Proton acceptor in catalysis.

The protein belongs to the peptidase C19 family. As to quaternary structure, catalytic component of the Usp12-46 deubiquitylase complex consisting of Usp12-46, Wdr20 and Uaf1. The Usp12-46 deubiquitylase complex associates with arr/arrow; the interaction leads to deubiquitination and stabilization of arr/arrow.

It carries out the reaction Thiol-dependent hydrolysis of ester, thioester, amide, peptide and isopeptide bonds formed by the C-terminal Gly of ubiquitin (a 76-residue protein attached to proteins as an intracellular targeting signal).. In terms of biological role, catalytic component of the Usp12-46 deubiquitylase complex. Deubiquitylates the wg/wingless-signaling receptor arr/arrow, which stabilizes the receptor and increases its concentration at the cell surface; this enhances the sensitivity of cells to wg/wingless-signal stimulation. This increases the amplitude and spatial range of the signaling response to the wg/wingless morphogen gradient, facilitating the precise, concentration-dependent regulation of its target genes. Required for wg/wingless-mediated signaling in the wing imaginal disc and for wg/wingless-dependent regulation of adult intestinal stem cell proliferation. Negative regulator of Notch signaling, possibly by regulating lysosomal degradation of N/Notch and affecting cell surface receptor levels; this may be context and cell-type specific function involved in external sensory organ development but not in wing imaginal-disc dorsoventral boundary signaling. Protects against HTT/huntingtin-induced polyglutamine expansion-dependent neurodegeneration. The chain is Ubiquitin carboxyl-terminal hydrolase 12/46 homolog from Drosophila melanogaster (Fruit fly).